Consider the following 576-residue polypeptide: Beta-bisabolene synthase (576 aa).

(2E,6E)-farnesyl diphosphate is bound by residues Arg-286, Asp-323, Asp-327, Arg-466, and Asn-469. Positions 323 and 327 each coordinate Mg(2+). The DDXXD motif signature appears at 323 to 327 (DDVYD). The Mg(2+) site is built by Asn-469, Thr-473, and Glu-477.

This sequence belongs to the terpene synthase family. Tpsb subfamily. Requires Mg(2+) as cofactor. Mn(2+) serves as cofactor.

In terms of biological role, produces almost exclusively beta-bisabolene and only traces of alpha-bisabolol from (2E,6E)-farnesyl diphosphate in fragrance biosynthesis. In Santalum austrocaledonicum (Sandalwood), this protein is Beta-bisabolene synthase.